We begin with the raw amino-acid sequence, 1456 residues long: CLIP-associating protein 1-B (1456 aa).

3 HEAT repeats span residues 68-87, 88-124, and 163-200; these read LLGM…RFRT, QIGT…QASN, and LTLS…HVGE. The segment at 237–296 is disordered; that stretch reads TDKNFDDEDSVDGNRPSSASSSASSKAPQTARRGVSLGTGRRPGTSSAAPKTGGTAKEGA. Positions 284–296 are enriched in low complexity; that stretch reads AAPKTGGTAKEGA. The HEAT 4 repeat unit spans residues 442–479; it reads THVPRLIPIITSNCTSKSVAVRRRCYEFLDLLLQEWQT. Disordered regions lie at residues 547 to 728 and 776 to 796; these read SIVS…DRFG and GMYS…ERSY. Over residues 550–569 the composition is skewed to low complexity; it reads SLPQSDRSSSSSQESLNRPL. The span at 573 to 594 shows a compositional bias: polar residues; it reads RSPTGSTVSRATSKSTTGSLQR. 3 stretches are compositionally biased toward low complexity: residues 603–618, 642–656, and 665–679; these read AAAT…ASTA, QSSG…TPAD, and VVSQ…SSPG. Over residues 711–721 the composition is skewed to polar residues; that stretch reads QGCSRETSPSR. Residues 785–796 show a composition bias toward low complexity; sequence SDASSACSERSY. The stretch at 930–967 is one HEAT 5 repeat; it reads QQFNILMRFIVDQTQTPNLKVKVAILKYIESLARQMDP. Disordered regions lie at residues 1037–1080 and 1121–1147; these read LKNS…GLSP and VRRD…DLRG. Residues 1038–1050 are compositionally biased toward low complexity; that stretch reads KNSSNSSMGSPSN. The span at 1062 to 1074 shows a compositional bias: polar residues; the sequence is SRASPLTSPTNCS. The span at 1121 to 1130 shows a compositional bias: basic and acidic residues; sequence VRRDGKKESE. HEAT repeat units lie at residues 1260 to 1297 and 1378 to 1415; these read EHFK…NQPA and QILP…VIGE.

Belongs to the CLASP family. As to quaternary structure, interacts (via C-terminus) with clip1/clip-170, and cenpe.

It is found in the cytoplasm. The protein localises to the cytoskeleton. The protein resides in the microtubule organizing center. It localises to the centrosome. Its subcellular location is the chromosome. It is found in the centromere. The protein localises to the kinetochore. The protein resides in the spindle. It localises to the golgi apparatus. Its subcellular location is the trans-Golgi network. In terms of biological role, microtubule plus-end tracking protein that promotes the stabilization of dynamic microtubules during anaphase. Plays a crucial role in chromatin-induced microtubule formation. May also act at microtubule minus ends. May be involved in the nucleation of noncentrosomal microtubules originating from the trans-Golgi network (TGN). In Xenopus laevis (African clawed frog), this protein is CLIP-associating protein 1-B.